Here is a 949-residue protein sequence, read N- to C-terminus: MTDSKYFTTTKKGEIFELKAELNSDKKEKKKEAVKKVIASMTVGKDVSALFPDVVNCMQTDNLELKKLVYLYLMNYAKSQPDMAIMAVNTFVKDCEDPNPLIRALAVRTMGCIRVDKITEYLCEPLRKCLKDEDPYVRKTAAVCVAKLHDINAQLVEDQGFLDTLKDLISDSNPMVVANRVAALSEIAESHPSSNLLDLKAQSINKLLTALNECTEWAQIFILDCLGNYMPKDDREAQSICERVTPRLSHANSAVVLSAVKVLMKFMEMLSKDLDYYATLLKKLAPPLVTLLSAEPEPQYVPLRNINLIVQKRPEILKHEMKVFFVKYNDPIYVKLEKLDIMIRLASQANIAQVLAELKEYATEVDVDFVRKAVRAIGRCAIKVEQSAERCVSTLLDLIQTKVNYVVQEAIVVIKDIFRKYPNKYESVIATLCENLDSLDEPEARAAMIWIVGEYAERIDNADELLESFLDGFHDESTQVQLQLLTAIVKLFLKKPTETQELVQQVLSLATQDSDNPDLRDRGYIYWRLLSTDPVAAKEVVLAEKPLISEETDLIEPTLLDELICYIGTLASVYHKPPNAFVEGGRGVVHKSLPPRTASSESTESPEAAPAGAPASDQPDVIPAQGDLLGDLLNLDLGPPVSGPPLAASSVQMGAVDLLGGGLDSLMGDEPEGIGDSNFGAPPASVAAAAPARLGAPVSSGLSDLFDLTSGVGTLSGSYVAPKAVWLPAMKAKGLEISGTFTRQVGSISMDLQLTNKALQVMTDFAIQFNRNSFGLAPAAPLQVHAPLSPNQTVEISLPLNTVGSVMKMEPLNNLQVAVKNNIDVFYFSTLYPLHVLFVEDGKMDRQMFLATWKDIPNENEAQFQIRDCPLNTEAASSKLQSSNIFTVAKRTVEGQDMLYQSLKLTNGIWVLAELRIQPGNPSFTLSLKCRAPEVSQHDIQAYETILKN.

Lys318 bears the N6-acetyllysine mark. The residue at position 574 (Tyr574) is a 3'-nitrotyrosine. The disordered stretch occupies residues 592–623 (SLPPRTASSESTESPEAAPAGAPASDQPDVIP). The segment covering 594–616 (PPRTASSESTESPEAAPAGAPAS) has biased composition (low complexity).

This sequence belongs to the adaptor complexes large subunit family. Adaptor protein complex 1 (AP-1) is a heterotetramer composed of two large adaptins (gamma-type subunit AP1G1 and beta-type subunit AP1B1), a medium adaptin (mu-type subunit AP1M1 or AP1M2) and a small adaptin (sigma-type subunit AP1S1 or AP1S2 or AP1S3). In terms of processing, the N-terminus is blocked.

It localises to the golgi apparatus. It is found in the cytoplasmic vesicle. The protein localises to the clathrin-coated vesicle membrane. Functionally, subunit of clathrin-associated adaptor protein complex 1 that plays a role in protein sorting in the late-Golgi/trans-Golgi network (TGN) and/or endosomes. The AP complexes mediate both the recruitment of clathrin to membranes and the recognition of sorting signals within the cytosolic tails of transmembrane cargo molecules. This is AP-1 complex subunit beta-1 (Ap1b1) from Rattus norvegicus (Rat).